We begin with the raw amino-acid sequence, 162 residues long: Caveolin-2 (162 aa).

Over 1–86 (MGLETEKADV…FEMSKYVIYK (86 aa)) the chain is Cytoplasmic. Tyrosine 19 is subject to Phosphotyrosine; by SRC. Serine 20 and serine 23 each carry phosphoserine. Tyrosine 27 is modified (phosphotyrosine; by SRC). An intramembrane region (helical) is located at residues 87–107 (FLTVFLAIPLAFAAGILFATL). Over 108–162 (SCLHIWIIMPFVKTCLMVLPSVQTIWKSVTDVVIAPLCTSIGRSFSSVSLQLSHD) the chain is Cytoplasmic.

This sequence belongs to the caveolin family. In terms of assembly, monomer or homodimer. Interacts with CAV1; the interaction forms a stable heterooligomeric complex that is required for targeting to lipid rafts and for caveolae formation. Tyrosine phosphorylated forms do not form heterooligomers with the Tyr-19-phosphorylated form existing as a monomer or dimer, and the Tyr-27-form as a monomer only. Interacts (tyrosine phosphorylated form) with the SH2 domain-containing proteins, RASA1, NCK1 and SRC. Interacts (tyrosine phosphorylated form) with INSR, the interaction (Tyr-27-phosphorylated form) is increased on insulin stimulation. Interacts (Tyr-19 phosphorylated form) with MAPK1 (phosphorylated form); the interaction, promoted by insulin, leads to nuclear location and MAPK1 activation. Interacts with STAT3; the interaction is increased on insulin-induced tyrosine phosphorylation leading to STAT activation. In terms of processing, phosphorylated on serine and tyrosine residues. CAV1 promotes phosphorylation on Ser-23 which then targets the complex to the plasma membrane, lipid rafts and caveolae. Phosphorylation on both Tyr-19 and Tyr-27 is required for insulin-induced 'Ser-727' phosphorylation of STAT3 and its activation. Phosphorylation on Tyr-19 is required for insulin-induced phosphorylation of MAPK1 and DNA binding of STAT3. Tyrosine phosphorylation is induced by both EGF and insulin. In terms of tissue distribution, expressed in aortic endothelial cells.

It localises to the nucleus. The protein resides in the cytoplasm. The protein localises to the golgi apparatus membrane. Its subcellular location is the cell membrane. It is found in the membrane. It localises to the caveola. May act as a scaffolding protein within caveolar membranes. Interacts directly with G-protein alpha subunits and can functionally regulate their activity. Acts as an accessory protein in conjunction with CAV1 in targeting to lipid rafts and driving caveolae formation. Positive regulator of cellular mitogenesis of the MAPK signaling pathway. Required for the insulin-stimulated nuclear translocation and activation of MAPK1 and STAT3, and the subsequent regulation of cell cycle progression. The sequence is that of Caveolin-2 (CAV2) from Bos taurus (Bovine).